Here is a 213-residue protein sequence, read N- to C-terminus: ATP-dependent Clp protease proteolytic subunit (213 aa).

Catalysis depends on serine 114, which acts as the Nucleophile. Histidine 139 is a catalytic residue.

The protein belongs to the peptidase S14 family. In terms of assembly, fourteen ClpP subunits assemble into 2 heptameric rings which stack back to back to give a disk-like structure with a central cavity, resembling the structure of eukaryotic proteasomes.

It is found in the cytoplasm. The enzyme catalyses Hydrolysis of proteins to small peptides in the presence of ATP and magnesium. alpha-casein is the usual test substrate. In the absence of ATP, only oligopeptides shorter than five residues are hydrolyzed (such as succinyl-Leu-Tyr-|-NHMec, and Leu-Tyr-Leu-|-Tyr-Trp, in which cleavage of the -Tyr-|-Leu- and -Tyr-|-Trp bonds also occurs).. Functionally, cleaves peptides in various proteins in a process that requires ATP hydrolysis. Has a chymotrypsin-like activity. Plays a major role in the degradation of misfolded proteins. This is ATP-dependent Clp protease proteolytic subunit from Methylobacillus flagellatus (strain ATCC 51484 / DSM 6875 / VKM B-1610 / KT).